A 208-amino-acid chain; its full sequence is uncharacterized protein (208 aa).

This is an uncharacterized protein from Ictalurid herpesvirus 1 (strain Auburn) (IcHV-1).